The chain runs to 198 residues: Endothelin-3 (198 aa).

The signal sequence occupies residues 1–16 (MEPGLWLLFGLTVTSA). Positions 17–86 (AGLVPCPQPG…SKGGPVHGRA (70 aa)) are excised as a propeptide. The tract at residues 22-79 (CPQPGDAGKSGVPGTPPTARSEGDIQEPVAMTAVQGPSPRSPEQEQELGRFGEQASKG) is disordered. 2 disulfides stabilise this stretch: cysteine 89–cysteine 103 and cysteine 91–cysteine 99. Residues 110–198 (INTPEQTVPY…RGNGGLRPTR (89 aa)) constitute a propeptide that is removed on maturation. The segment at 150 to 164 (CACVQSQDSACLHFC) is endothelin-like. The segment at 174 to 198 (SRTATNPDKEEEPASRGNGGLRPTR) is disordered.

Belongs to the endothelin/sarafotoxin family. Expressed in which included heart, lung, liver, kidney, spleen, stomach, pancreas, duodenum, colon, uterus, ovary and testis.

The protein localises to the secreted. Endothelins are endothelium-derived vasoconstrictor peptides. The sequence is that of Endothelin-3 (EDN3) from Canis lupus familiaris (Dog).